The chain runs to 504 residues: Maturase K (504 aa).

The protein belongs to the intron maturase 2 family. MatK subfamily.

It localises to the plastid. The protein resides in the chloroplast. Functionally, usually encoded in the trnK tRNA gene intron. Probably assists in splicing its own and other chloroplast group II introns. This chain is Maturase K, found in Hamamelis japonica (Japanese witch hazel).